The following is an 885-amino-acid chain: Probable LRR receptor-like serine/threonine-protein kinase At1g51820 (885 aa).

The signal sequence occupies residues M1–A20. Residues Q21–P509 are Extracellular-facing. Residues N22, N93, N135, N194, N228, N250, N254, N281, N287, N424, N437, N456, and N461 are each glycosylated (N-linked (GlcNAc...) asparagine). LRR repeat units follow at residues I403–N424, H427–A447, and S451–K473. Residues V510–L530 form a helical membrane-spanning segment. Residues R531–R885 lie on the Cytoplasmic side of the membrane. One can recognise a Protein kinase domain in the interval N578–L851. ATP is bound by residues L584–V592 and K606. Y651 is modified (phosphotyrosine). The active-site Proton acceptor is D703. At S737 the chain carries Phosphoserine. A phosphothreonine mark is found at T738 and T743. Y751 carries the phosphotyrosine modification.

Belongs to the protein kinase superfamily. Ser/Thr protein kinase family.

It localises to the membrane. It carries out the reaction L-seryl-[protein] + ATP = O-phospho-L-seryl-[protein] + ADP + H(+). It catalyses the reaction L-threonyl-[protein] + ATP = O-phospho-L-threonyl-[protein] + ADP + H(+). This Arabidopsis thaliana (Mouse-ear cress) protein is Probable LRR receptor-like serine/threonine-protein kinase At1g51820.